The following is a 247-amino-acid chain: (7aS)-7a-methyl-1,5-dioxo-2,3,5,6,7,7a-hexahydro-1H-indene-carboxyl-CoA hydrolase (247 aa).

This sequence belongs to the enoyl-CoA hydratase/isomerase family.

It catalyses the reaction (7aS)-7a-methyl-1,5-dioxo-2,3,5,6,7,7a-hexahydro-1H-indene-carboxyl-CoA + H2O = (3E)-2-(2-carboxylatoethyl)-3-methyl-6-oxocyclohex-1-ene-1-carboxyl-CoA + H(+). It functions in the pathway steroid metabolism; cholesterol degradation. Its function is as follows. Involved in the final steps of cholesterol and steroid degradation. Catalyzes the hydrolytic ring D opening of (7aS)-7a-methyl-1,5-dioxo-2,3,5,6,7,7a-hexahydro-1H-indene-carboxyl-CoA (HIEC-CoA) to (3E)-2-(2-carboxylatoethyl)-3-methyl-6-oxocyclohex-1-ene-1-carboxyl-CoA (COCHEA-CoA). The polypeptide is (7aS)-7a-methyl-1,5-dioxo-2,3,5,6,7,7a-hexahydro-1H-indene-carboxyl-CoA hydrolase (Mycobacterium tuberculosis (strain ATCC 25618 / H37Rv)).